We begin with the raw amino-acid sequence, 928 residues long: DNA polymerase I (928 aa).

A 5'-3' exonuclease domain is found at 1–323 (MVQIPQNPLI…ADEAPEVTAT (323 aa)). A 3'-5' exonuclease domain is found at 324–517 (VISYDNYVTI…LHLKMWPDLQ (194 aa)). A klenow fragment region spans residues 324–928 (VISYDNYVTI…GSGENWDQAH (605 aa)). The interval 521–928 (GPLNVFENIE…GSGENWDQAH (408 aa)) is polymerase.

This sequence belongs to the DNA polymerase type-A family. In terms of assembly, single-chain monomer with multiple functions.

The catalysed reaction is DNA(n) + a 2'-deoxyribonucleoside 5'-triphosphate = DNA(n+1) + diphosphate. Functionally, in addition to polymerase activity, this DNA polymerase exhibits 3'-5' and 5'-3' exonuclease activity. It is able to utilize nicked circular duplex DNA as a template and can unwind the parental DNA strand from its template. Its function is as follows. Genetic interactions among priB, dam, lexA, nagC, polA, rdgB, rdgB, rep and uup link the PriA-PriB replication restart pathway to DNA double-strand break repair. The protein is DNA polymerase I (polA) of Escherichia coli (strain K12).